Consider the following 178-residue polypeptide: Alkyl hydroperoxide reductase AhpD (178 aa).

Cysteine 130 (proton donor) is an active-site residue. Cysteine 130 and cysteine 133 form a disulfide bridge. Cysteine 133 (cysteine sulfenic acid (-SOH) intermediate) is an active-site residue.

It belongs to the AhpD family. In terms of assembly, homotrimer.

The enzyme catalyses N(6)-[(R)-dihydrolipoyl]-L-lysyl-[lipoyl-carrier protein] + a hydroperoxide = N(6)-[(R)-lipoyl]-L-lysyl-[lipoyl-carrier protein] + an alcohol + H2O. Functionally, antioxidant protein with alkyl hydroperoxidase activity. Required for the reduction of the AhpC active site cysteine residues and for the regeneration of the AhpC enzyme activity. In Mycobacterium ulcerans (strain Agy99), this protein is Alkyl hydroperoxide reductase AhpD.